The following is a 274-amino-acid chain: Ceramide synthase (274 aa).

In terms of domain architecture, TLC spans 34–261 (ADAVIVSARL…ICRGACRLFW (228 aa)). 4 helical membrane passes run 130-150 (FLMV…SVVW), 159-179 (LGCM…KILI), 194-214 (ALML…LYWA), and 223-243 (LLAV…LLLA).

Expressed in testis. Expressed in the retina with higher expression levels in the macular than in the peripheral region.

The protein resides in the golgi apparatus membrane. It is found in the endoplasmic reticulum membrane. The enzyme catalyses sphing-4-enine + octadecanoyl-CoA = N-octadecanoylsphing-4-enine + CoA + H(+). It carries out the reaction eicosanoyl-CoA + sphing-4-enine = N-eicosanoyl-sphing-4-enine + CoA + H(+). It catalyses the reaction sphing-4-enine + hexadecanoyl-CoA = N-hexadecanoylsphing-4-enine + CoA + H(+). Involved in ceramide synthesis. In Homo sapiens (Human), this protein is Ceramide synthase.